Here is a 338-residue protein sequence, read N- to C-terminus: Lipoate-protein ligase A (338 aa).

Residues 29 to 216 (SPDQRVLFLW…AFFAYYDEQV (188 aa)) form the BPL/LPL catalytic domain. Residues Arg71, 76–79 (GAVF), and Lys134 contribute to the ATP site. Lys134 contributes to the (R)-lipoate binding site.

The protein belongs to the LplA family. Monomer.

It localises to the cytoplasm. It catalyses the reaction L-lysyl-[lipoyl-carrier protein] + (R)-lipoate + ATP = N(6)-[(R)-lipoyl]-L-lysyl-[lipoyl-carrier protein] + AMP + diphosphate + H(+). Its pathway is protein modification; protein lipoylation via exogenous pathway; protein N(6)-(lipoyl)lysine from lipoate: step 1/2. The protein operates within protein modification; protein lipoylation via exogenous pathway; protein N(6)-(lipoyl)lysine from lipoate: step 2/2. Catalyzes both the ATP-dependent activation of exogenously supplied lipoate to lipoyl-AMP and the transfer of the activated lipoyl onto the lipoyl domains of lipoate-dependent enzymes. The chain is Lipoate-protein ligase A from Yersinia pseudotuberculosis serotype IB (strain PB1/+).